The primary structure comprises 171 residues: S-ribosylhomocysteine lyase (171 aa).

Fe cation contacts are provided by His54, His58, and Cys128.

This sequence belongs to the LuxS family. Homodimer. Fe cation is required as a cofactor.

It carries out the reaction S-(5-deoxy-D-ribos-5-yl)-L-homocysteine = (S)-4,5-dihydroxypentane-2,3-dione + L-homocysteine. In terms of biological role, involved in the synthesis of autoinducer 2 (AI-2) which is secreted by bacteria and is used to communicate both the cell density and the metabolic potential of the environment. The regulation of gene expression in response to changes in cell density is called quorum sensing. Catalyzes the transformation of S-ribosylhomocysteine (RHC) to homocysteine (HC) and 4,5-dihydroxy-2,3-pentadione (DPD). The sequence is that of S-ribosylhomocysteine lyase from Yersinia pseudotuberculosis serotype O:1b (strain IP 31758).